Reading from the N-terminus, the 108-residue chain is Movement protein (108 aa).

Positions M1–A25 are disordered. The chain crosses the membrane as a helical span at residues E35 to L55. The tract at residues L73–V108 is disordered. Residues V99–V108 show a composition bias toward basic and acidic residues.

This sequence belongs to the mastrevirus movement protein family. As to quaternary structure, interacts with the capsid protein (CP). Part of a MP-CP-viral DNA complex.

The protein resides in the host membrane. Its function is as follows. Involved in the viral transport within, and between cells. This Megathyrsus maximus (PanSV) protein is Movement protein.